A 435-amino-acid chain; its full sequence is MNKHHTLTKQKRKAGLLSIIPGLGQIANQQLSKGLLFLAITGLFAFELCVFGIQALTGLMTLGSVPGEDHSLFMLIEGTLQLIVTMIFLMFYIFNIHDSRKTAAMKAAGLEVNTTAKDMICHAGDKGFPYLFTLPAYIMMVFVIIFPVLVTLFVALTNYDFYHIPPNRLIDWVGFKNFLNIFFLGSYRETFVNVLGWTVIWTICATTLQIILGIVTALFVNQDFIKGKRIFRMIFLFPWAVPAFITIMSFSNMFNDSIGAVNAQVIPLFNHLPFVELPAIAWKTDPFWTKTALIMIQTWLGFPYIYVMVTGVLQAIPGELYEAAKIDGATFIQRFRHITFPMILFATAPVMITQYTFNFNNFSIIYLFNEGGPGSAGAGAGSTDILISWIYKLTTGTSPQYSVAAAVTLLISFIVIGISLIAFKKSNAFGNEEVM.

The next 8 helical transmembrane spans lie at 35-55 (LLFL…GIQA), 73-93 (FMLI…MFYI), 136-156 (AYIM…FVAL), 199-219 (VIWT…TALF), 234-254 (IFLF…SNMF), 293-313 (LIMI…TGVL), 337-357 (HITF…QYTF), and 403-423 (VAAA…LIAF). An ABC transmembrane type-1 domain is found at 195–422 (LGWTVIWTIC…FIVIGISLIA (228 aa)).

It belongs to the binding-protein-dependent transport system permease family. MalFG subfamily. The complex is composed of two ATP-binding proteins (MsmX), two transmembrane proteins (MdxF and MdxG) and a solute-binding protein (MdxE).

The protein localises to the cell membrane. Part of the ABC transporter complex involved in maltodextrin import. Probably responsible for the translocation of the substrate across the membrane. The sequence is that of Maltodextrin transport system permease protein MdxF (mdxF) from Bacillus subtilis (strain 168).